The following is a 492-amino-acid chain: Ketol-acid reductoisomerase (NADP(+)) (492 aa).

Residues 14–208 (LDQLGKCRFM…GGHRAGVLQS (195 aa)) form the KARI N-terminal Rossmann domain. Residues 45–48 (CGAQ), R68, R76, S78, and 108–110 (DKQ) contribute to the NADP(+) site. H132 is an active-site residue. G158 provides a ligand contact to NADP(+). KARI C-terminal knotted domains follow at residues 209-344 (SFVA…NAPQ) and 345-485 (FDGK…MKDM). Residues D217, E221, E389, and E393 each contribute to the Mg(2+) site. A substrate-binding site is contributed by S414.

Belongs to the ketol-acid reductoisomerase family. Mg(2+) serves as cofactor.

The catalysed reaction is (2R)-2,3-dihydroxy-3-methylbutanoate + NADP(+) = (2S)-2-acetolactate + NADPH + H(+). It carries out the reaction (2R,3R)-2,3-dihydroxy-3-methylpentanoate + NADP(+) = (S)-2-ethyl-2-hydroxy-3-oxobutanoate + NADPH + H(+). It functions in the pathway amino-acid biosynthesis; L-isoleucine biosynthesis; L-isoleucine from 2-oxobutanoate: step 2/4. It participates in amino-acid biosynthesis; L-valine biosynthesis; L-valine from pyruvate: step 2/4. Involved in the biosynthesis of branched-chain amino acids (BCAA). Catalyzes an alkyl-migration followed by a ketol-acid reduction of (S)-2-acetolactate (S2AL) to yield (R)-2,3-dihydroxy-isovalerate. In the isomerase reaction, S2AL is rearranged via a Mg-dependent methyl migration to produce 3-hydroxy-3-methyl-2-ketobutyrate (HMKB). In the reductase reaction, this 2-ketoacid undergoes a metal-dependent reduction by NADPH to yield (R)-2,3-dihydroxy-isovalerate. The chain is Ketol-acid reductoisomerase (NADP(+)) from Pectobacterium atrosepticum (strain SCRI 1043 / ATCC BAA-672) (Erwinia carotovora subsp. atroseptica).